Here is a 639-residue protein sequence, read N- to C-terminus: Kininogen-1 (639 aa).

Residues 1–18 (MKLITILLLCSRLLPSLA) form the signal peptide. A Cystatin kininogen-type 1 domain is found at 28–132 (CNDESLFQAV…TQICNITPGK (105 aa)). Disulfide bonds link Cys28-Cys609, Cys83-Cys94, Cys107-Cys126, Cys142-Cys145, Cys206-Cys218, Cys229-Cys248, Cys264-Cys267, Cys328-Cys340, and Cys351-Cys370. Asn82 carries an N-linked (GlcNAc...) asparagine glycan. The Cystatin kininogen-type 2 domain maps to 151 to 254 (VDSPELGPVL…SDSCEFYPGD (104 aa)). N-linked (GlcNAc...) asparagine glycans are attached at residues Asn169 and Asn205. One can recognise a Cystatin kininogen-type 3 domain in the interval 273–376 (VDSPELKEAL…TVKCKVLDMT (104 aa)). An N-linked (GlcNAc...) asparagine glycan is attached at Asn294. Ser332 carries the phosphoserine modification. Disordered stretches follow at residues 438–462 (NHQGHKHGHGIGHGHQKPHGLGHGH) and 476–547 (GYDH…LNPP). Basic residues predominate over residues 482–502 (PVGHGHGQRHGHGHGHGHGRD). A compositionally biased stretch (basic and acidic residues) spans 503-519 (KHTNKDKNNVKHTDQRR). Over residues 522–537 (LTSSSEDNTTSTQIQG) the composition is skewed to polar residues. N-linked (GlcNAc...) asparagine glycosylation occurs at Asn529.

In terms of processing, bradykinin is released from kininogen by plasma kallikrein. Post-translationally, phosphorylated by FAM20C in the extracellular medium. Bradykinin is inactivated by ACE, which removes the dipeptide Arg-Phe from its C-terminus. Plasma.

The protein resides in the secreted. It localises to the extracellular space. Kininogens are inhibitors of thiol proteases. HMW-kininogen plays an important role in blood coagulation by helping to position optimally prekallikrein and factor XI next to factor XII; HMW-kininogen inhibits the thrombin- and plasmin-induced aggregation of thrombocytes. LMW-kininogen inhibits the aggregation of thrombocytes. LMW-kininogen is in contrast to HMW-kininogen not involved in blood clotting. In terms of biological role, the active peptide bradykinin is a potent vasodilatator that is released from HMW-kininogen shows a variety of physiological effects: (A) influence in smooth muscle contraction, (B) induction of hypotension, (C) natriuresis and diuresis, (D) decrease in blood glucose level, (E) it is a mediator of inflammation and causes (E1) increase in vascular permeability, (E2) stimulation of nociceptors (4E3) release of other mediators of inflammation (e.g. prostaglandins), (F) it has a cardioprotective effect (directly via bradykinin action, indirectly via endothelium-derived relaxing factor action). The protein is Kininogen-1 (Kng1) of Rattus norvegicus (Rat).